Here is a 296-residue protein sequence, read N- to C-terminus: Enoyl-CoA hydratase AFT3-1 (296 aa).

The Peroxisomal targeting signal type 1 signature appears at 294–296 (PKL).

Belongs to the enoyl-CoA hydratase/isomerase family.

Its subcellular location is the peroxisome. The catalysed reaction is a (3S)-3-hydroxyacyl-CoA = a (2E)-enoyl-CoA + H2O. It carries out the reaction a 4-saturated-(3S)-3-hydroxyacyl-CoA = a (3E)-enoyl-CoA + H2O. It participates in mycotoxin biosynthesis. Enoyl-CoA hydratase; part of the gene clusters that mediate the biosynthesis of the host-selective toxins (HSTs) AF-toxins responsible for Alternaria black spot of strawberry disease by the strawberry pathotype. AF-toxin I and III are valine derivatives of 2,3-dyhydroxy-isovaleric acid and 2-hydroxy-isovaleric acid respectively, while AF II is an isoleucine derivative of 2-hydroxy-valeric acid. These derivatives are bound to a 9,10-epoxy-8-hydroxy-9-methyl-decatrienoic acid (EDA) moiety. On cellular level, AF-toxins affect plasma membrane of susceptible cells and cause a sudden increase in loss of K(+) after a few minutes of toxin treatment. The aldo-keto reductase AFTS1 catalyzes the conversion of 2-keto-isovaleric acid (2-KIV) to 2-hydroxy-isovaleric acid (2-HIV) by reduction of its ketone to an alcohol. The acyl-CoA ligase AFT1, the hydrolase AFT2 and the enoyl-CoA hydratases AFT3 and AFT6, but also the polyketide synthase AFT9, the acyl-CoA dehydrogenase AFT10, the cytochrome P450 monooxygenase AFT11 and the oxidoreductase AFT12 are all involved in the biosynthesis of the AK-, AF- and ACT-toxin common EDA structural moiety. The exact function of each enzyme, and of additional enzymes identified within the AF-toxin clusters have still to be determined. This is Enoyl-CoA hydratase AFT3-1 (AFT3-1) from Alternaria alternata (Alternaria rot fungus).